We begin with the raw amino-acid sequence, 824 residues long: Translation initiation factor IF-2 (824 aa).

2 disordered regions span residues 1-32 (MSDT…GRTK) and 45-232 (VPKA…MGGQ). Residues 45-57 (VPKAGATTSAGGK) are compositionally biased toward low complexity. The span at 86 to 144 (KAREAEEEAARIAEEKARAEERERRRAEQEERERAEREREESLKAKAEEDKRRKDEAEA) shows a compositional bias: basic and acidic residues. The segment covering 145–167 (AAKAAAAPAAEPVVQRPAAKAAP) has biased composition (low complexity). The segment covering 170–193 (APRKQQDRDRDNKRGGKGNDDSRR) has biased composition (basic and acidic residues). The region spanning 321-489 (TRPPVVTIMG…AIALQAEILE (169 aa)) is the tr-type G domain. Residues 330–337 (GHVDHGKT) are G1. 330 to 337 (GHVDHGKT) is a GTP binding site. A G2 region spans residues 355-359 (GITQH). The segment at 377-380 (DTPG) is G3. Residues 377–381 (DTPGH) and 431–434 (NKID) each bind GTP. Residues 431 to 434 (NKID) are G4. Positions 467 to 469 (SAI) are G5.

It belongs to the TRAFAC class translation factor GTPase superfamily. Classic translation factor GTPase family. IF-2 subfamily.

The protein localises to the cytoplasm. Its function is as follows. One of the essential components for the initiation of protein synthesis. Protects formylmethionyl-tRNA from spontaneous hydrolysis and promotes its binding to the 30S ribosomal subunits. Also involved in the hydrolysis of GTP during the formation of the 70S ribosomal complex. This chain is Translation initiation factor IF-2, found in Roseobacter denitrificans (strain ATCC 33942 / OCh 114) (Erythrobacter sp. (strain OCh 114)).